The following is a 292-amino-acid chain: UPF0282 protein MJ1629 (292 aa).

This sequence belongs to the UPF0282 family.

This Methanocaldococcus jannaschii (strain ATCC 43067 / DSM 2661 / JAL-1 / JCM 10045 / NBRC 100440) (Methanococcus jannaschii) protein is UPF0282 protein MJ1629.